The sequence spans 185 residues: Adenine phosphoribosyltransferase (185 aa).

It belongs to the purine/pyrimidine phosphoribosyltransferase family. Homodimer.

The protein localises to the cytoplasm. It catalyses the reaction AMP + diphosphate = 5-phospho-alpha-D-ribose 1-diphosphate + adenine. It functions in the pathway purine metabolism; AMP biosynthesis via salvage pathway; AMP from adenine: step 1/1. Catalyzes a salvage reaction resulting in the formation of AMP, that is energically less costly than de novo synthesis. This is Adenine phosphoribosyltransferase from Rubrobacter xylanophilus (strain DSM 9941 / JCM 11954 / NBRC 16129 / PRD-1).